The sequence spans 359 residues: Photosystem II protein D1 2 (359 aa).

3 consecutive transmembrane segments (helical) span residues 29 to 46 (YVGW…AATT), 118 to 133 (HFLI…EWEL), and 142 to 156 (WICV…AASA). Residue His118 coordinates chlorophyll a. Tyr126 is a binding site for pheophytin a. [CaMn4O5] cluster contacts are provided by Asp170 and Glu189. Residues 197-218 (FHMLGVAGVFGGSLFSAMHGSL) traverse the membrane as a helical segment. His198 contributes to the chlorophyll a binding site. Residues His215 and 264 to 265 (SF) each bind a quinone. A Fe cation-binding site is contributed by His215. A Fe cation-binding site is contributed by His272. The chain crosses the membrane as a helical span at residues 274-288 (FLAAWPVVGIWFTAL). [CaMn4O5] cluster-binding residues include His332, Glu333, Asp342, and Ala344. Positions 345–359 (AAESTPVALQAPAIG) are excised as a propeptide.

This sequence belongs to the reaction center PufL/M/PsbA/D family. In terms of assembly, PSII is composed of 1 copy each of membrane proteins PsbA, PsbB, PsbC, PsbD, PsbE, PsbF, PsbH, PsbI, PsbJ, PsbK, PsbL, PsbM, PsbT, PsbX, PsbY, PsbZ, Psb30/Ycf12, peripheral proteins PsbO, CyanoQ (PsbQ), PsbU, PsbV and a large number of cofactors. It forms dimeric complexes. The D1/D2 heterodimer binds P680, chlorophylls that are the primary electron donor of PSII, and subsequent electron acceptors. It shares a non-heme iron and each subunit binds pheophytin, quinone, additional chlorophylls, carotenoids and lipids. D1 provides most of the ligands for the Mn4-Ca-O5 cluster of the oxygen-evolving complex (OEC). There is also a Cl(-1) ion associated with D1 and D2, which is required for oxygen evolution. The PSII complex binds additional chlorophylls, carotenoids and specific lipids. is required as a cofactor. In terms of processing, tyr-161 forms a radical intermediate that is referred to as redox-active TyrZ, YZ or Y-Z. Post-translationally, C-terminally processed by CtpA; processing is essential to allow assembly of the oxygen-evolving complex and thus photosynthetic growth.

Its subcellular location is the cellular thylakoid membrane. It catalyses the reaction 2 a plastoquinone + 4 hnu + 2 H2O = 2 a plastoquinol + O2. In terms of biological role, photosystem II (PSII) is a light-driven water:plastoquinone oxidoreductase that uses light energy to abstract electrons from H(2)O, generating O(2) and a proton gradient subsequently used for ATP formation. It consists of a core antenna complex that captures photons, and an electron transfer chain that converts photonic excitation into a charge separation. The D1/D2 (PsbA/PsbD) reaction center heterodimer binds P680, the primary electron donor of PSII as well as several subsequent electron acceptors. The polypeptide is Photosystem II protein D1 2 (Synechococcus sp. (strain CC9311)).